The chain runs to 521 residues: GMP synthase [glutamine-hydrolyzing] (521 aa).

The Glutamine amidotransferase type-1 domain maps to 9-203 (KILILDFGSQ…ISGICQCEKN (195 aa)). Cys86 serves as the catalytic Nucleophile. Residues His177 and Glu179 contribute to the active site. A GMPS ATP-PPase domain is found at 204 to 396 (WTTDNIIAKL…LSIPPHIIYR (193 aa)). 231–237 (SGGVDSL) lines the ATP pocket.

In terms of assembly, homodimer.

The enzyme catalyses XMP + L-glutamine + ATP + H2O = GMP + L-glutamate + AMP + diphosphate + 2 H(+). The protein operates within purine metabolism; GMP biosynthesis; GMP from XMP (L-Gln route): step 1/1. Functionally, catalyzes the synthesis of GMP from XMP. In Ruthia magnifica subsp. Calyptogena magnifica, this protein is GMP synthase [glutamine-hydrolyzing].